Reading from the N-terminus, the 25-residue chain is Alpha-lytic protease (25 aa).

It belongs to the peptidase S1 family.

It carries out the reaction Preferential cleavage: Ala-|-Xaa, Val-|-Xaa in bacterial cell walls, elastin and other proteins.. This chain is Alpha-lytic protease, found in Achromobacter lyticus.